The primary structure comprises 384 residues: Guanine nucleotide-binding protein alpha-1 subunit (384 aa).

The segment at 1-22 (MGSLCSRNKHYSQADDEENTQT) is disordered. The N-myristoyl glycine moiety is linked to residue Gly2. Residue Cys5 is the site of S-palmitoyl cysteine attachment. A G-alpha domain is found at 38–384 (HIQKLLLLGA…RRNLFEAGLL (347 aa)). A G1 motif region spans residues 41-54 (KLLLLGAGDSGKST). Positions 49, 50, 51, 52, 53, 54, 163, 188, 194, 222, 288, 289, 291, and 356 each coordinate GTP. Ser53 contributes to the Mg(2+) binding site. Residues 186–194 (DVLFARIRT) are G2 motif. A Mg(2+)-binding site is contributed by Thr194. The G3 motif stretch occupies residues 215–224 (YRLFDVGGQR). A G4 motif region spans residues 284–291 (MLFLNKFD). Residues 354 to 359 (TTALDQ) form a G5 motif region.

Belongs to the G-alpha family. As to quaternary structure, g proteins are composed of 3 units; alpha, beta and gamma. The alpha chain contains the guanine nucleotide binding site. The cofactor is Mg(2+).

Functionally, guanine nucleotide-binding proteins (G proteins) are involved as modulators or transducers in various transmembrane signaling systems. This Solanum lycopersicum (Tomato) protein is Guanine nucleotide-binding protein alpha-1 subunit (GPA1).